Consider the following 213-residue polypeptide: Superoxide dismutase [Mn] (213 aa).

Mn(2+) contacts are provided by His-27, His-82, Asp-168, and His-172.

The protein belongs to the iron/manganese superoxide dismutase family. Homodimer. The cofactor is Mn(2+).

The catalysed reaction is 2 superoxide + 2 H(+) = H2O2 + O2. Its function is as follows. Destroys superoxide anion radicals which are normally produced within the cells and which are toxic to biological systems. The chain is Superoxide dismutase [Mn] (sodA) from Mannheimia haemolytica (Pasteurella haemolytica).